The following is a 154-amino-acid chain: Endoribonuclease YbeY (154 aa).

Residues H117, H121, and H127 each coordinate Zn(2+).

It belongs to the endoribonuclease YbeY family. Requires Zn(2+) as cofactor.

The protein resides in the cytoplasm. Single strand-specific metallo-endoribonuclease involved in late-stage 70S ribosome quality control and in maturation of the 3' terminus of the 16S rRNA. The chain is Endoribonuclease YbeY from Polaromonas sp. (strain JS666 / ATCC BAA-500).